A 142-amino-acid chain; its full sequence is Large ribosomal subunit protein uL13 (142 aa).

It belongs to the universal ribosomal protein uL13 family. Part of the 50S ribosomal subunit.

Its function is as follows. This protein is one of the early assembly proteins of the 50S ribosomal subunit, although it is not seen to bind rRNA by itself. It is important during the early stages of 50S assembly. This Maridesulfovibrio salexigens (strain ATCC 14822 / DSM 2638 / NCIMB 8403 / VKM B-1763) (Desulfovibrio salexigens) protein is Large ribosomal subunit protein uL13.